A 69-amino-acid chain; its full sequence is Consomatin Be1 (69 aa).

Positions 1 to 22 are cleaved as a signal peptide; that stretch reads MEMAYWVMVMMMVWITAPLSEG. Positions 23–57 are excised as a propeptide; sequence GKLNDVIRALAPDDVTPQFILRSLISRRRSDSDVR. Glu-58 carries the 4-carboxyglutamate modification. An intrachain disulfide couples Cys-62 to Cys-67. A D-tryptophan modification is found at Trp-64. 4-hydroxyproline is present on residues Pro-68 and Pro-69.

This sequence belongs to the conotoxin C superfamily. Consomatin family. In terms of tissue distribution, expressed by the venom duct.

It is found in the secreted. In terms of biological role, moderately activates human somatostatin receptors (SSTR) with a preferential activation of SSTR1 and SSTR4. In vivo, does not cause behavioral changes in mice within a few minutes of intracranial injection, but causes a progressive loss of movement thereafter. Four to five hours after injection, mice recover, even with the highest dose tested. Shows antinociception and antihyperalgesia activities in two mouse models of acute pain, most probably by acting outside the central nervous system. This chain is Consomatin Be1, found in Conus betulinus (Beech cone).